The primary structure comprises 193 residues: Xanthine phosphoribosyltransferase (193 aa).

Positions 20 and 27 each coordinate xanthine. Residue 129-133 (ANGKA) participates in 5-phospho-alpha-D-ribose 1-diphosphate binding. Lys-157 is a xanthine binding site.

It belongs to the purine/pyrimidine phosphoribosyltransferase family. Xpt subfamily. As to quaternary structure, homodimer.

The protein resides in the cytoplasm. The enzyme catalyses XMP + diphosphate = xanthine + 5-phospho-alpha-D-ribose 1-diphosphate. The protein operates within purine metabolism; XMP biosynthesis via salvage pathway; XMP from xanthine: step 1/1. Its function is as follows. Converts the preformed base xanthine, a product of nucleic acid breakdown, to xanthosine 5'-monophosphate (XMP), so it can be reused for RNA or DNA synthesis. This is Xanthine phosphoribosyltransferase from Bifidobacterium animalis subsp. lactis (strain AD011).